A 559-amino-acid polypeptide reads, in one-letter code: Palmitoyltransferase AKR1 (559 aa).

ANK repeat units follow at residues 8 to 38, 42 to 71, and 75 to 104; these read QGFN…PVDT, LGHT…RVDT, and EGFT…DIKA. 3 helical membrane passes run 148-168, 192-212, and 217-237; these read LMVL…FLFG, TAVF…YLLG, and LLWM…FFYG. Positions 272–322 constitute a DHHC domain; that stretch reads HFCVSCIAQRPLRSKHCKFCNRCVAKFDHHCPWIYNCIGAKNHRAFLIFLA. The S-palmitoyl cysteine intermediate role is filled by cysteine 302. A run of 2 helical transmembrane segments spans residues 316 to 336 and 373 to 393; these read AFLI…YLSF and LAFW…VQLY.

The protein belongs to the DHHC palmitoyltransferase family. AKR/ZDHHC17 subfamily.

It localises to the early endosome membrane. The protein localises to the golgi apparatus membrane. The enzyme catalyses L-cysteinyl-[protein] + hexadecanoyl-CoA = S-hexadecanoyl-L-cysteinyl-[protein] + CoA. Its function is as follows. Palmitoyltransferase specific for casein kinase 1. In Mortierella alpina (Oleaginous fungus), this protein is Palmitoyltransferase AKR1.